Consider the following 218-residue polypeptide: Thiamine-phosphate synthase (218 aa).

4-amino-2-methyl-5-(diphosphooxymethyl)pyrimidine is bound by residues 36–40 and Asp70; that span reads QVRSK. The Mg(2+) site is built by Asp71 and Asp94. Thr113 lines the 4-amino-2-methyl-5-(diphosphooxymethyl)pyrimidine pocket. 141–143 provides a ligand contact to 2-[(2R,5Z)-2-carboxy-4-methylthiazol-5(2H)-ylidene]ethyl phosphate; it reads TPT. Lys144 contacts 4-amino-2-methyl-5-(diphosphooxymethyl)pyrimidine.

This sequence belongs to the thiamine-phosphate synthase family. Mg(2+) is required as a cofactor.

The catalysed reaction is 2-[(2R,5Z)-2-carboxy-4-methylthiazol-5(2H)-ylidene]ethyl phosphate + 4-amino-2-methyl-5-(diphosphooxymethyl)pyrimidine + 2 H(+) = thiamine phosphate + CO2 + diphosphate. It carries out the reaction 2-(2-carboxy-4-methylthiazol-5-yl)ethyl phosphate + 4-amino-2-methyl-5-(diphosphooxymethyl)pyrimidine + 2 H(+) = thiamine phosphate + CO2 + diphosphate. It catalyses the reaction 4-methyl-5-(2-phosphooxyethyl)-thiazole + 4-amino-2-methyl-5-(diphosphooxymethyl)pyrimidine + H(+) = thiamine phosphate + diphosphate. The protein operates within cofactor biosynthesis; thiamine diphosphate biosynthesis; thiamine phosphate from 4-amino-2-methyl-5-diphosphomethylpyrimidine and 4-methyl-5-(2-phosphoethyl)-thiazole: step 1/1. Functionally, condenses 4-methyl-5-(beta-hydroxyethyl)thiazole monophosphate (THZ-P) and 2-methyl-4-amino-5-hydroxymethyl pyrimidine pyrophosphate (HMP-PP) to form thiamine monophosphate (TMP). This chain is Thiamine-phosphate synthase, found in Corynebacterium jeikeium (strain K411).